A 41-amino-acid polypeptide reads, in one-letter code: Large ribosomal subunit protein bL36 (41 aa).

Belongs to the bacterial ribosomal protein bL36 family.

In Bradyrhizobium diazoefficiens (strain JCM 10833 / BCRC 13528 / IAM 13628 / NBRC 14792 / USDA 110), this protein is Large ribosomal subunit protein bL36.